A 168-amino-acid polypeptide reads, in one-letter code: Group 2 truncated hemoglobin 3-1 (168 aa).

Heme b is bound at residue histidine 98.

The protein belongs to the truncated hemoglobin family. Group II subfamily. In terms of assembly, homodimer when ferric. Mainly expressed in root nodules, but barely in leaves, roots, stems, flowers and fruits.

Hemoglobin-like protein that exhibits an unusual concentration-independent binding of O(2) and CO. Required for general plant development and during nodulation. May promote shoot organogenesis from root explants. The chain is Group 2 truncated hemoglobin 3-1 from Lotus japonicus (Lotus corniculatus var. japonicus).